Reading from the N-terminus, the 671-residue chain is Pescadillo homolog (671 aa).

Coiled coils occupy residues 294–323 (NQAQ…ELFR) and 548–584 (QALR…TRKM). The 87-residue stretch at 317–403 (KVRELFRGLT…LVLPVTGYRI (87 aa)) folds into the BRCT domain. 2 disordered regions span residues 552–577 (KAQE…VKRQ) and 634–671 (GLVN…KWVQ). Positions 634–651 (GLVNKRLEARRQRAEAKG) are enriched in basic and acidic residues.

It belongs to the pescadillo family.

It localises to the nucleus. Its subcellular location is the nucleolus. The protein localises to the nucleoplasm. Required for maturation of ribosomal RNAs and formation of the large ribosomal subunit. This is Pescadillo homolog from Leishmania major.